Reading from the N-terminus, the 156-residue chain is MPKGSGKVLSQNKKANHDYFIEETYETGIVLQGTEIKSIRAGRVNLKDSFAKIERGEVFLHNMHVSPYEQGNRYNHDPLRTRKLLMHRKEINKLIGLTKEKGYSLVPLKLYLKNGFAKVLLGLGKGKKNYDKREDLKRKDAKREIERAFRDSQKGF.

This sequence belongs to the SmpB family.

Its subcellular location is the cytoplasm. Functionally, required for rescue of stalled ribosomes mediated by trans-translation. Binds to transfer-messenger RNA (tmRNA), required for stable association of tmRNA with ribosomes. tmRNA and SmpB together mimic tRNA shape, replacing the anticodon stem-loop with SmpB. tmRNA is encoded by the ssrA gene; the 2 termini fold to resemble tRNA(Ala) and it encodes a 'tag peptide', a short internal open reading frame. During trans-translation Ala-aminoacylated tmRNA acts like a tRNA, entering the A-site of stalled ribosomes, displacing the stalled mRNA. The ribosome then switches to translate the ORF on the tmRNA; the nascent peptide is terminated with the 'tag peptide' encoded by the tmRNA and targeted for degradation. The ribosome is freed to recommence translation, which seems to be the essential function of trans-translation. Required for trans-translation. Probably required for sporulation; deletion of the gene for tmRNA impairs sporulation via its effect on trans-translation, and as smpB is required for trans-translation under non-stress conditions, it is also probably required during sporulation. The sequence is that of SsrA-binding protein from Bacillus subtilis (strain 168).